The sequence spans 189 residues: Segregation and condensation protein B (189 aa).

Belongs to the ScpB family. In terms of assembly, homodimer. Homodimerization may be required to stabilize the binding of ScpA to the Smc head domains. Component of a cohesin-like complex composed of ScpA, ScpB and the Smc homodimer, in which ScpA and ScpB bind to the head domain of Smc. The presence of the three proteins is required for the association of the complex with DNA.

It localises to the cytoplasm. Its function is as follows. Participates in chromosomal partition during cell division. May act via the formation of a condensin-like complex containing Smc and ScpA that pull DNA away from mid-cell into both cell halves. This is Segregation and condensation protein B from Clostridium tetani (strain Massachusetts / E88).